Reading from the N-terminus, the 356-residue chain is Cyclin-A1-4 (356 aa).

Belongs to the cyclin family. Cyclin AB subfamily.

This Oryza sativa subsp. japonica (Rice) protein is Cyclin-A1-4 (CYCA1-4).